The sequence spans 553 residues: Thioredoxin domain-containing protein 2 (553 aa).

Disordered regions lie at residues 1 to 37 (MDVD…DANE) and 77 to 442 (TEES…EETM). Over residues 99–143 (PKQDDSPKSSEETIQPKEGDIPKAPEETIQSKKEDLPKSSEKAIQ) the composition is skewed to basic and acidic residues. 22 consecutive repeat copies span residues 113–127 (QPKE…EETI), 128–142 (QSKK…EKAI), 143–157 (QPKE…AKPI), 158–172 (QPKL…VKPS), 173–187 (QPKE…EETI), 188–202 (QSKK…EEAI), 203–217 (QPKE…AKPI), 218–232 (QPKL…VKPS), 233–247 (QPKE…EETI), 248–262 (QPKE…AKPI), 263–277 (QPKL…VKPS), 278–292 (QPKE…EEAI), 293–307 (QPKE…EEAI), 308–322 (QPKE…EEAI), 323–337 (QPKE…EEAI), 338–352 (QPKE…EETI), 353–367 (QPKK…EEAI), 368–382 (QPKE…KQAI), 383–397 (QPKE…EEAI), 398–412 (PPKE…EETI), 413–427 (QPKE…EEAT), and 428–442 (PSKE…EETM). A 22 X 15 AA approximate tandem repeat of Q-P-K-X-G-D-I-P-K-S-[PS]-E-[KE]-X-I region spans residues 113-442 (QPKEGDIPKA…DILKPEEETM (330 aa)). Residues 173 to 209 (QPKEGDIPKAPEETIQSKKEDLPKSSEEAIQPKEGDI) show a composition bias toward basic and acidic residues. Positions 233 to 254 (QPKESDIPKSPEETIQPKEGDI) are enriched in basic and acidic residues. Basic and acidic residues-rich tracts occupy residues 278–376 (QPKE…DIPK) and 385–439 (KEGD…KPEE). Ser-362 carries the post-translational modification Phosphoserine. Ser-392 is subject to Phosphoserine. Residues 429–553 (SKEGDILKPE…KLEAVIAELK (125 aa)) form the Thioredoxin domain. A disulfide bridge connects residues Cys-480 and Cys-483.

As to expression, testis-specific. Only expressed during spermiogenesis, prominently in round and elongating spermatids.

It is found in the cytoplasm. In terms of biological role, probably plays a regulatory role in sperm development. May participate in regulation of fibrous sheath (FS) assembly by supporting the formation of disulfide bonds during sperm tail morphogenesis. May also be required to rectify incorrect disulfide pairing and generate suitable pairs between the FS constituents. Can reduce disulfide bonds in vitro in the presence of NADP and thioredoxin reductase. The protein is Thioredoxin domain-containing protein 2 (TXNDC2) of Homo sapiens (Human).